Reading from the N-terminus, the 320-residue chain is Malate dehydrogenase (320 aa).

NAD(+) contacts are provided by residues 10–15 and Asp-34; that span reads GAGQIG. Substrate is bound by residues Arg-83 and Arg-89. Residues Asn-96 and 119–121 contribute to the NAD(+) site; that span reads ITN. The substrate site is built by Asn-121 and Arg-152. The Proton acceptor role is filled by His-176.

This sequence belongs to the LDH/MDH superfamily. MDH type 3 family.

It catalyses the reaction (S)-malate + NAD(+) = oxaloacetate + NADH + H(+). Catalyzes the reversible oxidation of malate to oxaloacetate. The chain is Malate dehydrogenase from Cereibacter sphaeroides (strain ATCC 17029 / ATH 2.4.9) (Rhodobacter sphaeroides).